We begin with the raw amino-acid sequence, 416 residues long: D-amino acid dehydrogenase (416 aa).

3 to 17 (ITILGSGVIGVTTAY) contributes to the FAD binding site.

Belongs to the DadA oxidoreductase family. The cofactor is FAD.

The enzyme catalyses a D-alpha-amino acid + A + H2O = a 2-oxocarboxylate + AH2 + NH4(+). It participates in amino-acid degradation; D-alanine degradation; NH(3) and pyruvate from D-alanine: step 1/1. Its function is as follows. Oxidative deamination of D-amino acids. In Brucella anthropi (strain ATCC 49188 / DSM 6882 / CCUG 24695 / JCM 21032 / LMG 3331 / NBRC 15819 / NCTC 12168 / Alc 37) (Ochrobactrum anthropi), this protein is D-amino acid dehydrogenase.